The following is a 76-amino-acid chain: Waprin-Rha1 (76 aa).

Positions 1–24 are cleaved as a signal peptide; sequence MQARVFLLLLGVILLGMMGPMVSA. Residues 25-75 enclose the WAP domain; it reads QDGKAGSCPDVNQPIPPLGVCKTTCATDSNCPDIQKCCKNGCGHMSCTRPS. 4 disulfides stabilise this stretch: Cys32–Cys62, Cys45–Cys66, Cys49–Cys61, and Cys55–Cys71.

This sequence belongs to the venom waprin family. As to expression, expressed by the venom gland.

Its subcellular location is the secreted. Its function is as follows. Damages membranes of susceptible bacteria. Has no hemolytic activity. Not toxic to mice. Does not inhibit the proteinases elastase and cathepsin G. In Rhabdophis tigrinus tigrinus (Tiger keelback snake), this protein is Waprin-Rha1.